The chain runs to 997 residues: Glutamate [NMDA] receptor subunit 1 (997 aa).

A signal peptide spans 1 to 26 (MAVAGFVFCRPLFGLAIVLLVAPIDA). The Extracellular portion of the chain corresponds to 27-573 (AQRHTASDNP…TLVSFLQPFS (547 aa)). N-linked (GlcNAc...) asparagine glycans are attached at residues N258, N314, N345, N397, N454, N481, and N501. Glycine is bound by residues 530-532 (PLT) and R537. Residues 574–594 (NTLWILVMVSVHVVALVLYLL) traverse the membrane as a helical segment. Residues 595-651 (DRFSPFGRFKLSHSDSNEEKALNLSSAVWFAWGVLLNSGIGEGTPRSFSARVLGMVW) are Cytoplasmic-facing. A helical membrane pass occupies residues 652 to 672 (AGFAMIIVASYTANLAAFLVL). At 673 to 831 (ERPKTKLSGI…KTPNTLGLKN (159 aa)) the chain is on the extracellular side. A glycan (N-linked (GlcNAc...) asparagine) is linked at N693. 2 residues coordinate glycine: S703 and D747. The helical transmembrane segment at 832–852 (MAGVFILVGVGIAGGVGLIII) threads the bilayer. At 853–997 (EVIYKKHQVK…YTSDVSHLVV (145 aa)) the chain is on the cytoplasmic side. The segment at 970–997 (LGKTRPQQSVLPPRYSPGYTSDVSHLVV) is disordered. Residues 987-997 (GYTSDVSHLVV) are compositionally biased toward polar residues.

The protein belongs to the glutamate-gated ion channel (TC 1.A.10.1) family. In terms of assembly, forms a heteromeric NMDA channel with Nmdar2.

Its subcellular location is the cell membrane. It is found in the postsynaptic cell membrane. The protein localises to the postsynaptic density. Functionally, NMDA receptor subtype of glutamate-gated ion channels with high calcium permeability and voltage-dependent sensitivity to magnesium. Mediated by glycine. This protein plays a key role in synaptic plasticity, synaptogenesis, excitotoxicity, memory acquisition and learning. It mediates neuronal functions in glutamate neurotransmission. Is involved in the cell surface targeting of NMDA receptors. Plays a role in associative learning and in long-term memory consolidation. This is Glutamate [NMDA] receptor subunit 1 from Drosophila sechellia (Fruit fly).